A 333-amino-acid chain; its full sequence is MAELTEVRAADLAALEFFTGCRPSALEPLATQLRPLKAEPGQVLIRQGDPALTFMLIESGRVQVSHAVADGPPIVLDIEPGLIIGEIALLRDAPRTATVVAAEPVIGWVGDRDAFDTILHLPGMFDRLVRIARQRLAAFITPIPVQVRTGEWFYLRPVLPGDVERTLNGPVEFSSETLYRRFQSVRKPTRALLEYLFEVDYADHFVWVMTEGALGPVIADARFVREGHNATMAEVAFTVGDDYQGRGIGSFLMGALIVSANYVGVQRFNARVLTDNMAMRKIMDRLGAVWVREDLGVVMTEVDVPPVDTVPFEPELIDQIRDATRKVIRAVSQ.

3',5'-cyclic AMP-binding positions include 85-88 (GEIA), 95-96 (RT), and Arg135. The 165-residue stretch at 153 to 317 (FYLRPVLPGD…DTVPFEPELI (165 aa)) folds into the N-acetyltransferase domain. Glu211 is a Mg(2+) binding site. Substrate-binding positions include 237 to 239 (FTV), 245 to 250 (GRGIGS), Asn276, and Arg285.

As to quaternary structure, homodimer. It depends on Mg(2+) as a cofactor.

Its activity is regulated as follows. Allosterically regulated by cAMP. Its function is as follows. Catalyzes specifically the acetylation of the epsilon-amino group of a highly conserved lysine residue in acetyl-CoA synthetase (ACS) and of the universal stress protein (USP) MSMEG_4207. Acetylation results in the inactivation of ACS activity and could be important for mycobacteria to adjust to environmental changes. This Mycolicibacterium smegmatis (strain ATCC 700084 / mc(2)155) (Mycobacterium smegmatis) protein is Acetyltransferase Pat.